The primary structure comprises 185 residues: Dual specificity protein phosphatase 3 (185 aa).

Residues glutamine 28 to lysine 179 form the Tyrosine-protein phosphatase domain. Cysteine 124 (phosphocysteine intermediate) is an active-site residue.

This sequence belongs to the protein-tyrosine phosphatase family. Non-receptor class dual specificity subfamily. Microtubule inner protein component of sperm flagellar doublet microtubules. Interacts with VRK3; this interaction activates DUSP3 phosphatase activity.

The protein localises to the nucleus. The protein resides in the cytoplasm. Its subcellular location is the cytoskeleton. It is found in the flagellum axoneme. It catalyses the reaction O-phospho-L-tyrosyl-[protein] + H2O = L-tyrosyl-[protein] + phosphate. It carries out the reaction O-phospho-L-seryl-[protein] + H2O = L-seryl-[protein] + phosphate. The catalysed reaction is O-phospho-L-threonyl-[protein] + H2O = L-threonyl-[protein] + phosphate. Functionally, shows activity both for tyrosine-protein phosphate and serine-protein phosphate, but displays a strong preference toward phosphotyrosines. Specifically dephosphorylates and inactivates ERK1 and ERK2. The protein is Dual specificity protein phosphatase 3 (Dusp3) of Mus musculus (Mouse).